Reading from the N-terminus, the 322-residue chain is uncharacterized protein (322 aa).

A helical membrane pass occupies residues 299–319 (GLLLEGTIVALILLEIILALA).

The protein resides in the membrane. This is an uncharacterized protein from Methanocaldococcus jannaschii (strain ATCC 43067 / DSM 2661 / JAL-1 / JCM 10045 / NBRC 100440) (Methanococcus jannaschii).